The primary structure comprises 906 residues: MPLRLDIKRKLTARSDRVKSVDLHPTEPWMLASLYNGSVCVWNHETQTLVKTFEVCDLPVRAAKFVARKNWVVTGADDMQIRVFNYNTLERVHMFEAHSDYIRCIAVHPTQPFILTSSDDMLIKLWDWDKKWSCSQVFEGHTHYVMQIVINPKDNNQFASASLDRTIKVWQLGSSSPNFTLEGHEKGVNCIDYYSGGDKPYLISGADDRLVKIWDYQNKTCVQTLEGHAQNVSCASFHPELPIIITGSEDGTVRIWHSSTYRLESTLNYGMERVWCVASLRGSNNVALGYDEGSIIVKLGREEPAMSMDANGKIIWAKHSEVQQANLKAMGDAEIKDGERLPLAVKDMGSCEIYPQTIQHNPNGRFVVVCGDGEYIIYTAMALRNKSFGSAQEFAWAHDSSEYAIRESNSVVKIFKNFKEKKSFKPDFGAESIYGGFLLGVRSVNGLAFYDWENTELIRRIEIQPKHIFWSDSGELVCIATEESFFILKYLSEKVLAAQETHEGVTEDGIEDGFEVLGEIQEIVKTGLWVGDCFIYTSSVNRLNYYVGGEIVTIAHLDRTMYLLGYIPKDNRLYLGDKELNIVSYSLLVSVLEYQTAVMRRDFSMADKVLPTIPKEQRTRVAHFLEKQGFKQQALTVSTDPEHRFELALQLGELKIAYQLAVEAESEQKWKQLAELAISKCQFGLAQECLHHAQDYGGLLLLATASGNASMVNKLAEGAERDGKNNVAFMSYFLQGKLDACLELLIRTGRLPEAAFLARTYLPSQVSRVVKLWRENLSKVNQKAAESLADPTEYENLFPGLKEAFVVEEWVKETHADLWPAKQYPLVTPNEERNVMEEAKGFQPSRSAAQQELDGKPASPTPVIVTSQTANKEEKSLLELEVDLDNLEIEDIDTTDINLDEDILDD.

WD repeat units follow at residues 13–52, 55–94, 97–136, 140–180, 183–224, 227–266, 350–388, and 390–425; these read ARSD…LVKT, VCDL…RVHM, AHSD…SCSQ, GHTH…PNFT, GHEK…CVQT, GHAQ…LEST, SCEI…NKSF, and SAQE…KSFK. Position 627 is an N6-acetyllysine (Lys627). A WD 9 repeat occupies 746 to 783; that stretch reads IRTGRLPEAAFLARTYLPSQVSRVVKLWRENLSKVNQK. Residues 837 to 872 are disordered; it reads EEAKGFQPSRSAAQQELDGKPASPTPVIVTSQTANK. A Phosphoserine modification is found at Ser859. Residue Thr861 is modified to Phosphothreonine. Residues 866 to 891 adopt a coiled-coil conformation; that stretch reads TSQTANKEEKSLLELEVDLDNLEIED.

Belongs to the WD repeat COPB2 family. In terms of assembly, oligomeric complex that consists of at least the alpha, beta, beta', gamma, delta, epsilon and zeta subunits. Probably interacts with PEX11A. Interacts with SCYL1. Interacts with JAGN1.

It is found in the cytoplasm. The protein localises to the cytosol. It localises to the golgi apparatus membrane. The protein resides in the cytoplasmic vesicle. Its subcellular location is the COPI-coated vesicle membrane. Functionally, the coatomer is a cytosolic protein complex that binds to dilysine motifs and reversibly associates with Golgi non-clathrin-coated vesicles, which further mediate biosynthetic protein transport from the ER, via the Golgi up to the trans Golgi network. Coatomer complex is required for budding from Golgi membranes, and is essential for the retrograde Golgi-to-ER transport of dilysine-tagged proteins. In mammals, the coatomer can only be recruited by membranes associated to ADP-ribosylation factors (ARFs), which are small GTP-binding proteins; the complex also influences the Golgi structural integrity, as well as the processing, activity, and endocytic recycling of LDL receptors. Its function is as follows. This coatomer complex protein, essential for Golgi budding and vesicular trafficking, is a selective binding protein (RACK) for protein kinase C, epsilon type. It binds to Golgi membranes in a GTP-dependent manner. The sequence is that of Coatomer subunit beta' (COPB2) from Bos taurus (Bovine).